The chain runs to 439 residues: L-cysteine:1D-myo-inositol 2-amino-2-deoxy-alpha-D-glucopyranoside ligase 2 (439 aa).

Cys-60 is a binding site for Zn(2+). Residues Cys-60–Thr-63, Thr-75, and Asn-98–Thr-100 each bind L-cysteinyl-5'-AMP. A 'HIGH' region motif is present at residues Ile-62–His-72. The 'ERGGDP' region signature appears at Glu-203–Pro-208. Trp-243 contributes to the L-cysteinyl-5'-AMP binding site. Cys-247 is a binding site for Zn(2+). Gly-265–Asp-267 contributes to the L-cysteinyl-5'-AMP binding site. A Zn(2+)-binding site is contributed by His-272. Ile-299 lines the L-cysteinyl-5'-AMP pocket. A 'KMSKS' region motif is present at residues Lys-305–Ser-309.

The protein belongs to the class-I aminoacyl-tRNA synthetase family. MshC subfamily. Monomer. Zn(2+) is required as a cofactor.

It catalyses the reaction 1D-myo-inositol 2-amino-2-deoxy-alpha-D-glucopyranoside + L-cysteine + ATP = 1D-myo-inositol 2-(L-cysteinylamino)-2-deoxy-alpha-D-glucopyranoside + AMP + diphosphate + H(+). Its function is as follows. Catalyzes the ATP-dependent condensation of GlcN-Ins and L-cysteine to form L-Cys-GlcN-Ins. This Corynebacterium urealyticum (strain ATCC 43042 / DSM 7109) protein is L-cysteine:1D-myo-inositol 2-amino-2-deoxy-alpha-D-glucopyranoside ligase 2.